The primary structure comprises 453 residues: MFASSPDHFRPHDSLNLPTYIHISLMESEEQCDSINFPFSLRLDNPTLERIAVKKLKCIERGYAYPHIDIVFARGETSLLTNGLITSEKDQKTCGFYKSVQTISRNSTELQLLPDFETKTNLNGYVIFAYNTMEHMHTPKFTTSWKTWSGARMLSTRMPLPHIVTKMSFFKKVSGHLTFEYILIAKVKNMMVNAAPALNVLHYMKPKLCAYVGAYRKISFEVNRNLCRSLGLAEANYADALTNRFRVSYSNNTGYVEMSKFIEYRCKEEEEEARAAKEKLVKKSTHVQTEPTDTLRNIRKKLPRTLPSTPNTIRSPSTPPIFYPTYPSPNSIIGTIIEHKSEIVTVGNNYLLVLDNRNQAANVLSYTPRSEALQKAEKIFNDQMPSLPVEHKDIPQVFSRSPSNLYNSNNETPLLQNFQKLPEDDGSLLRHLKTKYFNSEEYTSAEFCKHMPK.

This is an uncharacterized protein from Caenorhabditis elegans.